Here is a 176-residue protein sequence, read N- to C-terminus: Ribosome maturation factor RimM (176 aa).

Residues 97-176 (EDEFYWRDLI…QIIVDWDPDF (80 aa)) enclose the PRC barrel domain.

This sequence belongs to the RimM family. Binds ribosomal protein uS19.

The protein resides in the cytoplasm. In terms of biological role, an accessory protein needed during the final step in the assembly of 30S ribosomal subunit, possibly for assembly of the head region. Essential for efficient processing of 16S rRNA. May be needed both before and after RbfA during the maturation of 16S rRNA. It has affinity for free ribosomal 30S subunits but not for 70S ribosomes. The protein is Ribosome maturation factor RimM of Shewanella amazonensis (strain ATCC BAA-1098 / SB2B).